The sequence spans 190 residues: ATP synthase subunit delta (190 aa).

This sequence belongs to the ATPase delta chain family. F-type ATPases have 2 components, F(1) - the catalytic core - and F(0) - the membrane proton channel. F(1) has five subunits: alpha(3), beta(3), gamma(1), delta(1), epsilon(1). F(0) has three main subunits: a(1), b(2) and c(10-14). The alpha and beta chains form an alternating ring which encloses part of the gamma chain. F(1) is attached to F(0) by a central stalk formed by the gamma and epsilon chains, while a peripheral stalk is formed by the delta and b chains.

The protein resides in the cell inner membrane. F(1)F(0) ATP synthase produces ATP from ADP in the presence of a proton or sodium gradient. F-type ATPases consist of two structural domains, F(1) containing the extramembraneous catalytic core and F(0) containing the membrane proton channel, linked together by a central stalk and a peripheral stalk. During catalysis, ATP synthesis in the catalytic domain of F(1) is coupled via a rotary mechanism of the central stalk subunits to proton translocation. In terms of biological role, this protein is part of the stalk that links CF(0) to CF(1). It either transmits conformational changes from CF(0) to CF(1) or is implicated in proton conduction. In Anaplasma marginale (strain Florida), this protein is ATP synthase subunit delta.